A 335-amino-acid polypeptide reads, in one-letter code: Phosphate acyltransferase (335 aa).

It belongs to the PlsX family. As to quaternary structure, homodimer. Probably interacts with PlsY.

The protein localises to the cytoplasm. The enzyme catalyses a fatty acyl-[ACP] + phosphate = an acyl phosphate + holo-[ACP]. It functions in the pathway lipid metabolism; phospholipid metabolism. Catalyzes the reversible formation of acyl-phosphate (acyl-PO(4)) from acyl-[acyl-carrier-protein] (acyl-ACP). This enzyme utilizes acyl-ACP as fatty acyl donor, but not acyl-CoA. In Streptococcus pyogenes serotype M6 (strain ATCC BAA-946 / MGAS10394), this protein is Phosphate acyltransferase.